The following is a 117-amino-acid chain: Large ribosomal subunit protein uL18 (117 aa).

This sequence belongs to the universal ribosomal protein uL18 family. Part of the 50S ribosomal subunit; part of the 5S rRNA/L5/L18/L25 subcomplex. Contacts the 5S and 23S rRNAs.

This is one of the proteins that bind and probably mediate the attachment of the 5S RNA into the large ribosomal subunit, where it forms part of the central protuberance. This chain is Large ribosomal subunit protein uL18, found in Francisella philomiragia subsp. philomiragia (strain ATCC 25017 / CCUG 19701 / FSC 153 / O#319-036).